The sequence spans 488 residues: Cobyric acid synthase (488 aa).

In terms of domain architecture, GATase cobBQ-type spans 247–440 (LLRVIVPVLP…VHGVFDEPTA (194 aa)). Catalysis depends on Cys-328, which acts as the Nucleophile. The active site involves His-432.

Belongs to the CobB/CobQ family. CobQ subfamily.

Its pathway is cofactor biosynthesis; adenosylcobalamin biosynthesis. In terms of biological role, catalyzes amidations at positions B, D, E, and G on adenosylcobyrinic A,C-diamide. NH(2) groups are provided by glutamine, and one molecule of ATP is hydrogenolyzed for each amidation. The polypeptide is Cobyric acid synthase (Cupriavidus pinatubonensis (strain JMP 134 / LMG 1197) (Cupriavidus necator (strain JMP 134))).